The chain runs to 312 residues: CD-NTase-associated protein 12 (312 aa).

Residues 5–127 (RLFIGSSSEE…FNGLTLARFD (123 aa)) enclose the TIR domain.

This sequence in the C-terminal section; belongs to the bacterial STING family. In terms of assembly, forms homodimers; in the presence of c-di-GMP forms filaments with an ordered array of parallel-stacked subunits.

The enzyme catalyses NAD(+) + H2O = ADP-D-ribose + nicotinamide + H(+). Its activity is regulated as follows. NAD(+) hydrolase activity is strongly stimulated by c-di-GMP, weakly by 3'3'-cGAMP, very weakly by c-di-AMP but not at all by 2'3'-cGAMP. Self-association of TIR domains is required for NADase activity. Effector protein of a CBASS antiviral system with NAD(+) hydrolase activity. CBASS (cyclic oligonucleotide-based antiphage signaling system) provides immunity against bacteriophage. The CD-NTase protein synthesizes cyclic nucleotides in response to infection; these serve as specific second messenger signals. The signals activate a diverse range of effectors, leading to bacterial cell death and thus abortive phage infection. A type I-D CBASS(GG) system. In terms of biological role, binds c-di-GMP, does not bind cUMP-AMP. Upon activation by c-di-GMP forms filaments which hydrolyze NAD(+); filament formation is required for enzyme activation. The chain is CD-NTase-associated protein 12 from Niabella drilacis (strain DSM 25811 / CCM 8410 / CCUG 62505 / LMG 26954 / E90).